The chain runs to 160 residues: SsrA-binding protein (160 aa).

Residues 131-160 (KKEYDKRHTERERDSDRELQRAVRTKGKDD) form a disordered region.

Belongs to the SmpB family.

It localises to the cytoplasm. Functionally, required for rescue of stalled ribosomes mediated by trans-translation. Binds to transfer-messenger RNA (tmRNA), required for stable association of tmRNA with ribosomes. tmRNA and SmpB together mimic tRNA shape, replacing the anticodon stem-loop with SmpB. tmRNA is encoded by the ssrA gene; the 2 termini fold to resemble tRNA(Ala) and it encodes a 'tag peptide', a short internal open reading frame. During trans-translation Ala-aminoacylated tmRNA acts like a tRNA, entering the A-site of stalled ribosomes, displacing the stalled mRNA. The ribosome then switches to translate the ORF on the tmRNA; the nascent peptide is terminated with the 'tag peptide' encoded by the tmRNA and targeted for degradation. The ribosome is freed to recommence translation, which seems to be the essential function of trans-translation. The polypeptide is SsrA-binding protein (Pseudomonas syringae pv. tomato (strain ATCC BAA-871 / DC3000)).